The chain runs to 370 residues: Thiamine-repressible mitochondrial transport protein THI74 (370 aa).

The Cytoplasmic portion of the chain corresponds to 1-10 (MNRVGIDVDH). A helical transmembrane segment spans residues 11–31 (MIGVLLLAVVVVFWVGASCLT). Residues 32–42 (NELLETNAYNK) are Mitochondrial intermembrane-facing. A helical transmembrane segment spans residues 43-63 (PFFLTYLNISSFALYLTPDLW). The Cytoplasmic segment spans residues 64–119 (RIIQSRRKSLQERTERTLPIHTQESFSEFLPLLSSTPSTSSNLSSIADTKVKDTMR). Residues 120–140 (LSLLFCVLWFVANLAANAALS) form a helical membrane-spanning segment. Residues 129–190 (FVANLAANAA…SLFGIILIVM (62 aa)) enclose the EamA domain. The Mitochondrial intermembrane portion of the chain corresponds to 141–146 (YTTVAS). A helical transmembrane segment spans residues 147-167 (STILSSTSSFFTLFLATSLGI). Residues 168–169 (ET) are Cytoplasmic-facing. Residues 170–190 (FSTKKLLGLFVSLFGIILIVM) form a helical membrane-spanning segment. Residues 191–203 (QSSKQQDSVSASS) are Mitochondrial intermembrane-facing. The helical transmembrane segment at 204–224 (FLVGNTLALLGSLGYSVYTTL) threads the bilayer. The Cytoplasmic portion of the chain corresponds to 225–239 (LKYEISSKGLRLDIQ). A helical transmembrane segment spans residues 240-260 (MFLGYVGIFTFLLFWPILIIL). The Mitochondrial intermembrane segment spans residues 261-273 (DITHMETFELPSN). Residues 274–294 (FHISFLVMLNCIIIFVSDYFW) form a helical membrane-spanning segment. Topologically, residues 295 to 303 (CKALILTSP) are cytoplasmic. A helical membrane pass occupies residues 304 to 324 (LVVTVALTFTIPLAMFADFVW). The Mitochondrial intermembrane segment spans residues 325-326 (RE). Residues 327–347 (AFFTPWYIIGVIFIFVSFFLV) traverse the membrane as a helical segment. Residues 348–370 (NHRGESAVEKDCAAVEKGPILDA) are Cytoplasmic-facing.

It localises to the mitochondrion membrane. Its function is as follows. May be involved in thiaminediphosphate transport across the mitochondrial membrane. This is Thiamine-repressible mitochondrial transport protein THI74 (THI74) from Saccharomyces cerevisiae (strain ATCC 204508 / S288c) (Baker's yeast).